The chain runs to 683 residues: Glucosylceramidase (683 aa).

The active-site Proton donor is Glu254. The Nucleophile role is filled by Glu483.

It belongs to the glycosyl hydrolase 5 (cellulase A) family.

The protein resides in the membrane. The catalysed reaction is a beta-D-glucosyl-(1&lt;-&gt;1')-N-acylsphing-4-enine + H2O = an N-acylsphing-4-enine + D-glucose. Its activity is regulated as follows. Inhibited by metal cations Co(2+), Cu(2+), Ni(2+), Pb(2+) and Zn(2+). Not inhibited by metal chelator ethylenediaminetetraacetic acid (EDTA). Specifically hydrolyzes the glucosidic linkage in glucosylceramide. May prevent accumulation of aberrent glucosylceramide containing immature ceramide. This chain is Glucosylceramidase, found in Rhizopus delemar (strain RA 99-880 / ATCC MYA-4621 / FGSC 9543 / NRRL 43880) (Mucormycosis agent).